A 446-amino-acid polypeptide reads, in one-letter code: tRNA-2-methylthio-N(6)-dimethylallyladenosine synthase (446 aa).

The 118-residue stretch at 3–120 (KKLFIETHGC…LPEMIDAARS (118 aa)) folds into the MTTase N-terminal domain. Positions 12, 49, 83, 157, 161, and 164 each coordinate [4Fe-4S] cluster. The Radical SAM core domain occupies 143-375 (RVDGPTAFVS…QSRIHQQGYE (233 aa)). Residues 378–442 (RRMVGSTQRI…PHSLRGTLID (65 aa)) enclose the TRAM domain.

This sequence belongs to the methylthiotransferase family. MiaB subfamily. Monomer. The cofactor is [4Fe-4S] cluster.

The protein localises to the cytoplasm. The catalysed reaction is N(6)-dimethylallyladenosine(37) in tRNA + (sulfur carrier)-SH + AH2 + 2 S-adenosyl-L-methionine = 2-methylsulfanyl-N(6)-dimethylallyladenosine(37) in tRNA + (sulfur carrier)-H + 5'-deoxyadenosine + L-methionine + A + S-adenosyl-L-homocysteine + 2 H(+). In terms of biological role, catalyzes the methylthiolation of N6-(dimethylallyl)adenosine (i(6)A), leading to the formation of 2-methylthio-N6-(dimethylallyl)adenosine (ms(2)i(6)A) at position 37 in tRNAs that read codons beginning with uridine. The sequence is that of tRNA-2-methylthio-N(6)-dimethylallyladenosine synthase from Pseudomonas aeruginosa (strain UCBPP-PA14).